The sequence spans 667 residues: Probable endo-1,3(4)-beta-glucanase AFLA_105200 (667 aa).

The N-terminal stretch at 1 to 24 is a signal peptide; sequence MSSSSFVWTVGSIALSSLITPTIA. One can recognise a GH16 domain in the interval 25–288; sequence DGSGSRYQLT…WAGGVFGDSG (264 aa). Residue asparagine 63 is glycosylated (N-linked (GlcNAc...) asparagine). The active-site Nucleophile is glutamate 144. Glutamate 149 functions as the Proton donor in the catalytic mechanism. Composition is skewed to polar residues over residues 354–363 and 379–394; these read VPSVTSTPIL and ATSS…QTSV. Disordered regions lie at residues 354–427 and 448–646; these read VPSV…ADAV and GTIQ…AGAS. 3 stretches are compositionally biased toward low complexity: residues 395 to 427, 448 to 483, and 574 to 622; these read AGAE…ADAV, GTIQ…SQEP, and APTS…EATA. The span at 623-637 shows a compositional bias: polar residues; that stretch reads PTETDSGASTGTNPE. The GPI-anchor amidated glycine moiety is linked to residue glycine 644. The propeptide at 645 to 667 is removed in mature form; the sequence is ASKSVGISGLAGIVCGIAMAMLA.

This sequence belongs to the glycosyl hydrolase 16 family.

Its subcellular location is the cell membrane. The catalysed reaction is Endohydrolysis of (1-&gt;3)- or (1-&gt;4)-linkages in beta-D-glucans when the glucose residue whose reducing group is involved in the linkage to be hydrolyzed is itself substituted at C-3.. Its function is as follows. Mixed-linked glucanase involved in the degradation of complex natural cellulosic substrates. The chain is Probable endo-1,3(4)-beta-glucanase AFLA_105200 from Aspergillus flavus (strain ATCC 200026 / FGSC A1120 / IAM 13836 / NRRL 3357 / JCM 12722 / SRRC 167).